Reading from the N-terminus, the 386-residue chain is Putative nickel insertion protein (386 aa).

Belongs to the LarC family.

The chain is Putative nickel insertion protein from Dictyoglomus thermophilum (strain ATCC 35947 / DSM 3960 / H-6-12).